A 122-amino-acid polypeptide reads, in one-letter code: PA-I galactophilic lectin (122 aa).

This sequence belongs to the LecA/PllA lectin family.

Its subcellular location is the cytoplasm. It is found in the periplasm. The protein localises to the cell surface. In terms of biological role, D-galactose specific lectin. Binds in decreasing order of affinity: melibiose, methyl-alpha-D-galactoside, D-galactose, methyl-beta-D-galactoside, N-acetyl-D-galactosamine. Similar to plant lectins in its selective (carbohydrate-specific) hemagglutinating activity. The chain is PA-I galactophilic lectin (lecA) from Pseudomonas aeruginosa (strain ATCC 15692 / DSM 22644 / CIP 104116 / JCM 14847 / LMG 12228 / 1C / PRS 101 / PAO1).